We begin with the raw amino-acid sequence, 147 residues long: Small ribosomal subunit protein uS12 (147 aa).

This sequence belongs to the universal ribosomal protein uS12 family. In terms of assembly, part of the 30S ribosomal subunit.

Its function is as follows. With S4 and S5 plays an important role in translational accuracy. Located at the interface of the 30S and 50S subunits. This is Small ribosomal subunit protein uS12 from Pyrobaculum calidifontis (strain DSM 21063 / JCM 11548 / VA1).